The sequence spans 123 residues: MPKRKAAAPNRAFKVADQIQRDLTELIARELKDPRVGMVTIQAVEVTPDYAHAKIYFSMLTGDVTETTEALNQAAGFLRNGLFKRLHIHTVPTLHFLFDRTTERAADMNALIAQAVASRSKDD.

The protein belongs to the RbfA family. As to quaternary structure, monomer. Binds 30S ribosomal subunits, but not 50S ribosomal subunits or 70S ribosomes.

It localises to the cytoplasm. One of several proteins that assist in the late maturation steps of the functional core of the 30S ribosomal subunit. Associates with free 30S ribosomal subunits (but not with 30S subunits that are part of 70S ribosomes or polysomes). Required for efficient processing of 16S rRNA. May interact with the 5'-terminal helix region of 16S rRNA. The polypeptide is Ribosome-binding factor A (Variovorax paradoxus (strain S110)).